A 200-amino-acid polypeptide reads, in one-letter code: MSNEEIKNKDEQLQQDAVETEAEVVGTDADIDWNQAADEIDEKEAKIAQLEAALLVSEERVKEQQDSVLRARAEVENMRRRSEQEVDKARKFALSRFAEELLPVIDNLERAIQAADGEVEAIKPLLEGVELTHKTFVDTIAKFGLKEINPHGEVFNPEFHQAMSIQESAEHEPNTVMFVMQKGYELNGRVLRPAMVMVSK.

The segment covering 1-12 (MSNEEIKNKDEQ) has biased composition (basic and acidic residues). The tract at residues 1–30 (MSNEEIKNKDEQLQQDAVETEAEVVGTDAD) is disordered.

It belongs to the GrpE family. As to quaternary structure, homodimer.

It localises to the cytoplasm. In terms of biological role, participates actively in the response to hyperosmotic and heat shock by preventing the aggregation of stress-denatured proteins, in association with DnaK and GrpE. It is the nucleotide exchange factor for DnaK and may function as a thermosensor. Unfolded proteins bind initially to DnaJ; upon interaction with the DnaJ-bound protein, DnaK hydrolyzes its bound ATP, resulting in the formation of a stable complex. GrpE releases ADP from DnaK; ATP binding to DnaK triggers the release of the substrate protein, thus completing the reaction cycle. Several rounds of ATP-dependent interactions between DnaJ, DnaK and GrpE are required for fully efficient folding. The chain is Protein GrpE from Vibrio cholerae serotype O1 (strain ATCC 39315 / El Tor Inaba N16961).